The chain runs to 105 residues: Integration host factor subunit beta (105 aa).

Belongs to the bacterial histone-like protein family. As to quaternary structure, heterodimer of an alpha and a beta chain.

Its function is as follows. This protein is one of the two subunits of integration host factor, a specific DNA-binding protein that functions in genetic recombination as well as in transcriptional and translational control. This Bradyrhizobium sp. (strain ORS 278) protein is Integration host factor subunit beta.